A 299-amino-acid polypeptide reads, in one-letter code: MRKYSQRHIPVMVREVIEFLKPEDEKIILDCTVGEGGHSRAILEHCPGCRIIGIDVDSEVLRIAEEKLKEFSDRVSLFKVSYREADFLLKTLGIEKVDGILMDLGVSTYQLKGENRGFTFEREEPLDMRMDLESEVTAQKVLNELPEEELARIIFEYGEEKRFARRIARKIVENRPLNTTLDLVKAVREALPSYEIRRRKRHFATKTFQAIRIYVNRELENLKEFLKKAEDLLNPGGRIVVISFHSLEDRIVKETFRNSKKLRILTEKPVRPSEEEIRENPRARSGRLRAAERIEEGGD.

Residues 36 to 38 (GGH), D55, Y82, D103, and Q110 contribute to the S-adenosyl-L-methionine site. Basic and acidic residues-rich tracts occupy residues 269–282 (PVRPSEEEIRENPR) and 289–299 (RAAERIEEGGD). A disordered region spans residues 269–299 (PVRPSEEEIRENPRARSGRLRAAERIEEGGD).

This sequence belongs to the methyltransferase superfamily. RsmH family.

Its subcellular location is the cytoplasm. The enzyme catalyses cytidine(1402) in 16S rRNA + S-adenosyl-L-methionine = N(4)-methylcytidine(1402) in 16S rRNA + S-adenosyl-L-homocysteine + H(+). In terms of biological role, specifically methylates the N4 position of cytidine in position 1402 (C1402) of 16S rRNA. In Thermotoga maritima (strain ATCC 43589 / DSM 3109 / JCM 10099 / NBRC 100826 / MSB8), this protein is Ribosomal RNA small subunit methyltransferase H.